A 383-amino-acid chain; its full sequence is Ribosomal RNA large subunit methyltransferase G (383 aa).

This sequence belongs to the methyltransferase superfamily. RlmG family.

The protein localises to the cytoplasm. It carries out the reaction guanosine(1835) in 23S rRNA + S-adenosyl-L-methionine = N(2)-methylguanosine(1835) in 23S rRNA + S-adenosyl-L-homocysteine + H(+). Its function is as follows. Specifically methylates the guanine in position 1835 (m2G1835) of 23S rRNA. This chain is Ribosomal RNA large subunit methyltransferase G, found in Vibrio atlanticus (strain LGP32) (Vibrio splendidus (strain Mel32)).